A 183-amino-acid polypeptide reads, in one-letter code: MTKAHYIDFFKQAADKKIQWLKEELTKIRTGRPNPKIFDNLLIESYGQKMPLISLAQVTINPPREIIIKPFDPKSNTNAIYSEIQRANIGVQPVIDGEKIRVNFPQITQETRLENIKHVKKIIEQIYQELRVVRRDALQMIKKDNHNEDLENSLKAEIEKINKNYSNQLEEIQKDKEKELLTI.

It belongs to the RRF family.

Its subcellular location is the cytoplasm. Its function is as follows. Responsible for the release of ribosomes from messenger RNA at the termination of protein biosynthesis. May increase the efficiency of translation by recycling ribosomes from one round of translation to another. The sequence is that of Ribosome-recycling factor from Mycoplasma genitalium (strain ATCC 33530 / DSM 19775 / NCTC 10195 / G37) (Mycoplasmoides genitalium).